We begin with the raw amino-acid sequence, 370 residues long: Dual-specificity RNA methyltransferase RlmN (370 aa).

E93 (proton acceptor) is an active-site residue. The Radical SAM core domain occupies 99–337 (EEGRGTLCVS…VTTVRKTRGD (239 aa)). A disulfide bond links C106 and C343. [4Fe-4S] cluster is bound by residues C113, C117, and C120. S-adenosyl-L-methionine contacts are provided by residues 167-168 (GE), S199, 221-223 (SLH), and N300. Residue C343 is the S-methylcysteine intermediate of the active site.

It belongs to the radical SAM superfamily. RlmN family. Requires [4Fe-4S] cluster as cofactor.

It localises to the cytoplasm. It carries out the reaction adenosine(2503) in 23S rRNA + 2 reduced [2Fe-2S]-[ferredoxin] + 2 S-adenosyl-L-methionine = 2-methyladenosine(2503) in 23S rRNA + 5'-deoxyadenosine + L-methionine + 2 oxidized [2Fe-2S]-[ferredoxin] + S-adenosyl-L-homocysteine. It catalyses the reaction adenosine(37) in tRNA + 2 reduced [2Fe-2S]-[ferredoxin] + 2 S-adenosyl-L-methionine = 2-methyladenosine(37) in tRNA + 5'-deoxyadenosine + L-methionine + 2 oxidized [2Fe-2S]-[ferredoxin] + S-adenosyl-L-homocysteine. Its function is as follows. Specifically methylates position 2 of adenine 2503 in 23S rRNA and position 2 of adenine 37 in tRNAs. m2A2503 modification seems to play a crucial role in the proofreading step occurring at the peptidyl transferase center and thus would serve to optimize ribosomal fidelity. The sequence is that of Dual-specificity RNA methyltransferase RlmN from Francisella tularensis subsp. holarctica (strain LVS).